The chain runs to 497 residues: Guanosine-5'-triphosphate,3'-diphosphate pyrophosphatase (497 aa).

It belongs to the GppA/Ppx family. GppA subfamily.

The catalysed reaction is guanosine 3'-diphosphate 5'-triphosphate + H2O = guanosine 3',5'-bis(diphosphate) + phosphate + H(+). It participates in purine metabolism; ppGpp biosynthesis; ppGpp from GTP: step 2/2. In terms of biological role, catalyzes the conversion of pppGpp to ppGpp. Guanosine pentaphosphate (pppGpp) is a cytoplasmic signaling molecule which together with ppGpp controls the 'stringent response', an adaptive process that allows bacteria to respond to amino acid starvation, resulting in the coordinated regulation of numerous cellular activities. The chain is Guanosine-5'-triphosphate,3'-diphosphate pyrophosphatase from Aliivibrio fischeri (strain ATCC 700601 / ES114) (Vibrio fischeri).